The following is a 429-amino-acid chain: Enolase (429 aa).

Glutamine 163 is a (2R)-2-phosphoglycerate binding site. Catalysis depends on glutamate 205, which acts as the Proton donor. Positions 242, 287, and 314 each coordinate Mg(2+). (2R)-2-phosphoglycerate contacts are provided by lysine 339, arginine 368, serine 369, and lysine 390. Lysine 339 (proton acceptor) is an active-site residue.

It belongs to the enolase family. Mg(2+) serves as cofactor.

The protein resides in the cytoplasm. The protein localises to the secreted. Its subcellular location is the cell surface. The catalysed reaction is (2R)-2-phosphoglycerate = phosphoenolpyruvate + H2O. The protein operates within carbohydrate degradation; glycolysis; pyruvate from D-glyceraldehyde 3-phosphate: step 4/5. Its function is as follows. Catalyzes the reversible conversion of 2-phosphoglycerate (2-PG) into phosphoenolpyruvate (PEP). It is essential for the degradation of carbohydrates via glycolysis. The protein is Enolase of Cupriavidus taiwanensis (strain DSM 17343 / BCRC 17206 / CCUG 44338 / CIP 107171 / LMG 19424 / R1) (Ralstonia taiwanensis (strain LMG 19424)).